A 445-amino-acid chain; its full sequence is Trigger factor (445 aa).

Positions 162–247 constitute a PPIase FKBP-type domain; the sequence is GDQVTIDAIG…IKAVHTAEPT (86 aa).

Belongs to the FKBP-type PPIase family. Tig subfamily.

The protein localises to the cytoplasm. The catalysed reaction is [protein]-peptidylproline (omega=180) = [protein]-peptidylproline (omega=0). Involved in protein export. Acts as a chaperone by maintaining the newly synthesized protein in an open conformation. Functions as a peptidyl-prolyl cis-trans isomerase. The polypeptide is Trigger factor (Rickettsia massiliae (strain Mtu5)).